Here is a 149-residue protein sequence, read N- to C-terminus: Nucleoside diphosphate kinase (149 aa).

Residues Lys-9, Phe-57, Arg-85, Thr-91, Arg-102, and Asn-112 each contribute to the ATP site. His-115 functions as the Pros-phosphohistidine intermediate in the catalytic mechanism.

It belongs to the NDK family. As to quaternary structure, homotetramer. Mg(2+) is required as a cofactor.

It is found in the cytoplasm. The enzyme catalyses a 2'-deoxyribonucleoside 5'-diphosphate + ATP = a 2'-deoxyribonucleoside 5'-triphosphate + ADP. It catalyses the reaction a ribonucleoside 5'-diphosphate + ATP = a ribonucleoside 5'-triphosphate + ADP. Major role in the synthesis of nucleoside triphosphates other than ATP. The ATP gamma phosphate is transferred to the NDP beta phosphate via a ping-pong mechanism, using a phosphorylated active-site intermediate. This chain is Nucleoside diphosphate kinase, found in Staphylococcus aureus (strain Mu3 / ATCC 700698).